Reading from the N-terminus, the 201-residue chain is Small ribosomal subunit protein uS4c (201 aa).

Residues 1–14 (MSRYRGPRFKKIRR) show a composition bias toward basic residues. A disordered region spans residues 1–44 (MSRYRGPRFKKIRRLGALPGLTSKRPRAGSDPRNQSRSGKKSQY). The S4 RNA-binding domain occupies 89–152 (MRLDNTLFRL…NSRTLVQNLL (64 aa)).

The protein belongs to the universal ribosomal protein uS4 family. In terms of assembly, part of the 30S ribosomal subunit. Contacts protein S5. The interaction surface between S4 and S5 is involved in control of translational fidelity.

It is found in the plastid. Its subcellular location is the chloroplast. One of the primary rRNA binding proteins, it binds directly to 16S rRNA where it nucleates assembly of the body of the 30S subunit. In terms of biological role, with S5 and S12 plays an important role in translational accuracy. This is Small ribosomal subunit protein uS4c (rps4) from Draba nemorosa (Woodland whitlowgrass).